We begin with the raw amino-acid sequence, 123 residues long: Small ribosomal subunit protein eS8 (123 aa).

The disordered stretch occupies residues 1–37 (MKDQGRSTRKRTGGRLKHASNKKRHQLGREPAETTVG). Positions 7-26 (STRKRTGGRLKHASNKKRHQ) are enriched in basic residues.

Belongs to the eukaryotic ribosomal protein eS8 family. As to quaternary structure, part of the 30S ribosomal subunit.

This chain is Small ribosomal subunit protein eS8, found in Halorubrum lacusprofundi (strain ATCC 49239 / DSM 5036 / JCM 8891 / ACAM 34).